The following is a 56-amino-acid chain: Protein p56 (56 aa).

The protein belongs to the phi29likevirus protein p56 family. As to quaternary structure, homodimer. Interacts with host UDG; this interaction inhibits the uracil-DNA glycosylase.

Functionally, inhibits the host uracil-DNA glycosylase (UDG), an enzyme which removes uracil residues from DNA by the base excision repair. Interacts with host uracil-DNA glycosylase and prevents the latter from binding to DNA. Since the viral DNA polymerase efficiently incorporates dUMP into DNA, the virus needs to prevent the deleterious effect caused by host UDG when it eliminates uracil residues present in the viral genome. This chain is Protein p56 (1B), found in Bacillus phage PZA (Bacteriophage PZA).